Consider the following 689-residue polypeptide: Glycine--tRNA ligase beta subunit (689 aa).

The protein belongs to the class-II aminoacyl-tRNA synthetase family. As to quaternary structure, tetramer of two alpha and two beta subunits.

Its subcellular location is the cytoplasm. The catalysed reaction is tRNA(Gly) + glycine + ATP = glycyl-tRNA(Gly) + AMP + diphosphate. In Shewanella sediminis (strain HAW-EB3), this protein is Glycine--tRNA ligase beta subunit.